The following is a 1024-amino-acid chain: Hemolysin, plasmid (1024 aa).

Positions 20-32 are enriched in polar residues; that stretch reads AANKLHSAGQSTK. The interval 20 to 39 is disordered; sequence AANKLHSAGQSTKDALKKAA. The next 3 membrane-spanning stretches (helical) occupy residues 238–260, 268–327, and 365–411; these read IGAG…ILSN, KAAA…LSIA, and DASL…GILE. 2 N6-myristoyl lysine lipidation sites follow: lysine 564 and lysine 690. Hemolysin-type calcium-binding repeat units lie at residues 732–749, 750–767, 768–785, 786–803, 816–833, and 834–851; these read FGSK…DDLI, EGND…NDTL, SGGN…NDKL, IGVA…DDEF, FGGK…ADLL, and DGGE…NDIY.

Belongs to the RTX prokaryotic toxin (TC 1.C.11) family. In terms of processing, myristoylated by HlyC; the toxin only becomes active when modified. Mainly myristoylated, while a minor fraction is acylated with pentadecanoyl (C15:0; 26%) and heptadecanoyl (C17:0; 6%) fatty acyl groups. Fatty acylation is involved in binding to host membranes and promotes the irreversible insertion of Hemolysin into the host cell membrane. Can be activated by both myristoylation and palmitoylation, but HlyC catalyzes lysine myristoylation.

The protein localises to the secreted. It is found in the host cell membrane. Its function is as follows. Bacterial hemolysins are exotoxins that attack blood cell membranes and cause cell rupture by forming a pore. The chain is Hemolysin, plasmid from Escherichia coli.